The chain runs to 72 residues: Conotoxin VnMKLT2-0221 (72 aa).

The first 22 residues, 1 to 22 (MKLTCVLIVAVLFLTACQLTTA), serve as a signal peptide directing secretion. A propeptide spanning residues 23 to 45 (ASYARSERQHPDLGSSDQNSKLT) is cleaved from the precursor. A disordered region spans residues 26-45 (ARSERQHPDLGSSDQNSKLT). 3 disulfide bridges follow: C48-C62, C55-C66, and C61-C71.

The protein belongs to the conotoxin O1 superfamily. As to expression, expressed by the venom duct.

The protein localises to the secreted. The sequence is that of Conotoxin VnMKLT2-0221 from Conus ventricosus (Mediterranean cone).